Here is a 554-residue protein sequence, read N- to C-terminus: Glucose-6-phosphate isomerase (554 aa).

Glu-359 (proton donor) is an active-site residue. Residues His-390 and Lys-518 contribute to the active site.

It belongs to the GPI family.

Its subcellular location is the cytoplasm. It carries out the reaction alpha-D-glucose 6-phosphate = beta-D-fructose 6-phosphate. It functions in the pathway carbohydrate biosynthesis; gluconeogenesis. It participates in carbohydrate degradation; glycolysis; D-glyceraldehyde 3-phosphate and glycerone phosphate from D-glucose: step 2/4. Catalyzes the reversible isomerization of glucose-6-phosphate to fructose-6-phosphate. The chain is Glucose-6-phosphate isomerase from Pseudomonas syringae pv. tomato (strain ATCC BAA-871 / DC3000).